Reading from the N-terminus, the 310-residue chain is Olfactory receptor 5T7 (310 aa).

The Extracellular segment spans residues 1–23 (MENITEVTEFILMGFTDNADLEI). The N-linked (GlcNAc...) asparagine glycan is linked to Asn3. Residues 24–44 (LSFFLFLAIYLFTLMGNLGLI) form a helical membrane-spanning segment. Topologically, residues 45–52 (TLVIGDSR) are cytoplasmic. The chain crosses the membrane as a helical span at residues 53–73 (LHNPMYYFLSVLSSVDACYST). The Extracellular portion of the chain corresponds to 74–97 (VITPQMVVDFVSEKKVISFIGCAT). Cys95 and Cys187 are oxidised to a cystine. Residues 98 to 118 (QMFLAVTFGTTECFLLAAMAY) form a helical membrane-spanning segment. The Cytoplasmic portion of the chain corresponds to 119–131 (DRYVAIHNPLMYV). The chain crosses the membrane as a helical span at residues 132–152 (VSMSPRVYVPLIIASYAGGIL). Over 153-194 (HAVIHTVATFRLSFCGSNKISHIFCDIPPLLAISCSDTHFNQ) the chain is Extracellular. A helical membrane pass occupies residues 195-215 (LLLFYCAGFIEVVTILIVLLS). Residues 216–235 (YGFILSVILKTRSTEGKRKV) are Cytoplasmic-facing. The helical transmembrane segment at 236–256 (FSTCGSHLMAVSTFHGTVLFM) threads the bilayer. The Extracellular segment spans residues 257–269 (YVRPSDSYALEHD). The helical transmembrane segment at 270–290 (MMVSIFYSIVIPMLNPLIYSL) threads the bilayer. Over 291-310 (RNKDVKEAIKKVFGKRILCG) the chain is Cytoplasmic.

Belongs to the G-protein coupled receptor 1 family.

Its subcellular location is the cell membrane. Functionally, potential odorant receptor. In Mus musculus (Mouse), this protein is Olfactory receptor 5T7.